A 329-amino-acid chain; its full sequence is Holliday junction branch migration complex subunit RuvB (329 aa).

Residues 1–20 (MSRILEGDPVEGEKSWENEL) are disordered. The segment at 1 to 181 (MSRILEGDPV…FGIVERLQFY (181 aa)) is large ATPase domain (RuvB-L). The segment covering 11–20 (EGEKSWENEL) has biased composition (basic and acidic residues). ATP-binding positions include L20, R21, G62, K65, T66, T67, 128-130 (EDY), R171, Y181, and R218. Residue T66 participates in Mg(2+) binding. The segment at 182–252 (DKDALRQILM…IAVYALNQLG (71 aa)) is small ATPAse domain (RuvB-S). Residues 255-329 (QYGLDLMDRR…FAKSSVLADK (75 aa)) form a head domain (RuvB-H) region. Residues R291, K310, and R315 each contribute to the DNA site.

It belongs to the RuvB family. Homohexamer. Forms an RuvA(8)-RuvB(12)-Holliday junction (HJ) complex. HJ DNA is sandwiched between 2 RuvA tetramers; dsDNA enters through RuvA and exits via RuvB. An RuvB hexamer assembles on each DNA strand where it exits the tetramer. Each RuvB hexamer is contacted by two RuvA subunits (via domain III) on 2 adjacent RuvB subunits; this complex drives branch migration. In the full resolvosome a probable DNA-RuvA(4)-RuvB(12)-RuvC(2) complex forms which resolves the HJ.

It localises to the cytoplasm. It catalyses the reaction ATP + H2O = ADP + phosphate + H(+). Functionally, the RuvA-RuvB-RuvC complex processes Holliday junction (HJ) DNA during genetic recombination and DNA repair, while the RuvA-RuvB complex plays an important role in the rescue of blocked DNA replication forks via replication fork reversal (RFR). RuvA specifically binds to HJ cruciform DNA, conferring on it an open structure. The RuvB hexamer acts as an ATP-dependent pump, pulling dsDNA into and through the RuvAB complex. RuvB forms 2 homohexamers on either side of HJ DNA bound by 1 or 2 RuvA tetramers; 4 subunits per hexamer contact DNA at a time. Coordinated motions by a converter formed by DNA-disengaged RuvB subunits stimulates ATP hydrolysis and nucleotide exchange. Immobilization of the converter enables RuvB to convert the ATP-contained energy into a lever motion, pulling 2 nucleotides of DNA out of the RuvA tetramer per ATP hydrolyzed, thus driving DNA branch migration. The RuvB motors rotate together with the DNA substrate, which together with the progressing nucleotide cycle form the mechanistic basis for DNA recombination by continuous HJ branch migration. Branch migration allows RuvC to scan DNA until it finds its consensus sequence, where it cleaves and resolves cruciform DNA. In Bdellovibrio bacteriovorus (strain ATCC 15356 / DSM 50701 / NCIMB 9529 / HD100), this protein is Holliday junction branch migration complex subunit RuvB.